A 1342-amino-acid polypeptide reads, in one-letter code: DNA-directed RNA polymerase subunit beta (1342 aa).

This sequence belongs to the RNA polymerase beta chain family. In terms of assembly, the RNAP catalytic core consists of 2 alpha, 1 beta, 1 beta' and 1 omega subunit. When a sigma factor is associated with the core the holoenzyme is formed, which can initiate transcription.

It carries out the reaction RNA(n) + a ribonucleoside 5'-triphosphate = RNA(n+1) + diphosphate. Its function is as follows. DNA-dependent RNA polymerase catalyzes the transcription of DNA into RNA using the four ribonucleoside triphosphates as substrates. The protein is DNA-directed RNA polymerase subunit beta of Salmonella agona (strain SL483).